The primary structure comprises 133 residues: Large ribosomal subunit protein uL22 (133 aa).

The protein belongs to the universal ribosomal protein uL22 family. As to quaternary structure, part of the 50S ribosomal subunit.

Its function is as follows. This protein binds specifically to 23S rRNA; its binding is stimulated by other ribosomal proteins, e.g. L4, L17, and L20. It is important during the early stages of 50S assembly. It makes multiple contacts with different domains of the 23S rRNA in the assembled 50S subunit and ribosome. The globular domain of the protein is located near the polypeptide exit tunnel on the outside of the subunit, while an extended beta-hairpin is found that lines the wall of the exit tunnel in the center of the 70S ribosome. The protein is Large ribosomal subunit protein uL22 of Aquifex pyrophilus.